The sequence spans 343 residues: Phosphate acyltransferase (343 aa).

Belongs to the PlsX family. As to quaternary structure, homodimer. Probably interacts with PlsY.

The protein resides in the cytoplasm. It carries out the reaction a fatty acyl-[ACP] + phosphate = an acyl phosphate + holo-[ACP]. The protein operates within lipid metabolism; phospholipid metabolism. In terms of biological role, catalyzes the reversible formation of acyl-phosphate (acyl-PO(4)) from acyl-[acyl-carrier-protein] (acyl-ACP). This enzyme utilizes acyl-ACP as fatty acyl donor, but not acyl-CoA. This chain is Phosphate acyltransferase, found in Acidovorax sp. (strain JS42).